A 776-amino-acid polypeptide reads, in one-letter code: Homoaconitase, mitochondrial (776 aa).

The transit peptide at 1-38 directs the protein to the mitochondrion; it reads MQSRLVSQSGLGRRWAVLRCALSKTYQRRTLTSTRRQF. Residues C394, C463, and C466 each contribute to the [4Fe-4S] cluster site.

Belongs to the aconitase/IPM isomerase family. The cofactor is [4Fe-4S] cluster.

The protein resides in the mitochondrion. The catalysed reaction is (2R,3S)-homoisocitrate = cis-homoaconitate + H2O. It functions in the pathway amino-acid biosynthesis; L-lysine biosynthesis via AAA pathway; L-alpha-aminoadipate from 2-oxoglutarate: step 3/5. Functionally, catalyzes the reversible hydration of cis-homoaconitate to (2R,3S)-homoisocitrate, a step in the alpha-aminoadipate pathway for lysine biosynthesis. The protein is Homoaconitase, mitochondrial (lys4) of Emericella nidulans (strain FGSC A4 / ATCC 38163 / CBS 112.46 / NRRL 194 / M139) (Aspergillus nidulans).